A 677-amino-acid polypeptide reads, in one-letter code: Beta-galactosidase (677 aa).

The signal sequence occupies residues 1–23; that stretch reads MPGFLVRILPLLLALLLLGPTRG. Positions 24 to 28 are excised as a propeptide; it reads LRNAT. A glycan (N-linked (GlcNAc...) asparagine) is linked at N26. Residues Y83, E129, and N187 each coordinate substrate. E188 (proton donor) is an active-site residue. Cysteines 195 and 230 form a disulfide. N247 carries N-linked (GlcNAc...) asparagine glycosylation. Residue E268 is the Nucleophile of the active site. Y333 contacts substrate. Residues N464, N498, N545, and N555 are each glycosylated (N-linked (GlcNAc...) asparagine). C626 and C634 form a disulfide bridge. The disordered stretch occupies residues 654–677; sequence SKPVEKKLMPSPPQKNKDSWLDHV. A compositionally biased stretch (basic and acidic residues) spans 668-677; the sequence is KNKDSWLDHV.

Belongs to the glycosyl hydrolase 35 family. As to quaternary structure, homodimer. May form higher multimers.

It localises to the lysosome. It catalyses the reaction Hydrolysis of terminal non-reducing beta-D-galactose residues in beta-D-galactosides.. Cleaves beta-linked terminal galactosyl residues from gangliosides, glycoproteins, and glycosaminoglycans. The protein is Beta-galactosidase (GLB1) of Pongo abelii (Sumatran orangutan).